A 362-amino-acid chain; its full sequence is 3-dehydroquinate synthase (362 aa).

NAD(+) is bound by residues 71–76, 105–109, 129–130, Lys142, Lys151, and 169–172; these read DGEQYK, GVVGD, TT, and CLKT. Zn(2+) is bound by residues Glu184, His247, and His264.

Belongs to the sugar phosphate cyclases superfamily. Dehydroquinate synthase family. It depends on NAD(+) as a cofactor. Requires Co(2+) as cofactor. The cofactor is Zn(2+).

It localises to the cytoplasm. It catalyses the reaction 7-phospho-2-dehydro-3-deoxy-D-arabino-heptonate = 3-dehydroquinate + phosphate. Its pathway is metabolic intermediate biosynthesis; chorismate biosynthesis; chorismate from D-erythrose 4-phosphate and phosphoenolpyruvate: step 2/7. Its function is as follows. Catalyzes the conversion of 3-deoxy-D-arabino-heptulosonate 7-phosphate (DAHP) to dehydroquinate (DHQ). This is 3-dehydroquinate synthase from Escherichia coli O157:H7.